Here is a 204-residue protein sequence, read N- to C-terminus: Phosphoribosyl-dephospho-CoA transferase (204 aa).

Catalysis depends on residues D129 and D131.

It belongs to the MdcG family.

The enzyme catalyses apo-[malonate decarboxylase ACP] + 2'-(5''-triphospho-alpha-D-ribosyl)-3'-dephospho-CoA = holo-[malonate decarboxylase ACP] + diphosphate. Its function is as follows. Transfers 2'-(5-triphosphoribosyl)-3'-dephosphocoenzyme-A to the apo-[acyl-carrier-protein] of the malonate decarboxylase to yield holo-[acyl-carrier-protein]. The sequence is that of Phosphoribosyl-dephospho-CoA transferase from Pseudomonas putida (Arthrobacter siderocapsulatus).